We begin with the raw amino-acid sequence, 157 residues long: Eukaryotic translation initiation factor 5A-2 (157 aa).

At Ser2 the chain carries N-acetylserine. Ser2 is modified (phosphoserine). Position 7 is a phosphothreonine (Thr7). Lys51 is subject to Hypusine. A Phosphoserine modification is found at Ser74. Lys86 participates in a covalent cross-link: Glycyl lysine isopeptide (Lys-Gly) (interchain with G-Cter in ubiquitin).

The protein belongs to the eIF-5A family. In terms of assembly, homodimer. Binds to 80S ribosomes. Actively translating ribosomes show mutually exclusive binding of eIF5a (HYP2 or ANB1) and EFT1/eEF2. Interacts with DYS1 and LIA1. Post-translationally, lys-51 undergoes hypusination, a unique post-translational modification that consists in the addition of a butylamino group from spermidine to lysine side chain, leading to the formation of the unusual amino acid hypusine. eIF-5As are the only known proteins to undergo this modification, which is essential for their function.

The protein resides in the cytoplasm. Translation factor that promotes translation elongation and termination, particularly upon ribosome stalling at specific amino acid sequence contexts. Binds between the exit (E) and peptidyl (P) site of the ribosome and promotes rescue of stalled ribosome: specifically required for efficient translation of polyproline-containing peptides as well as other motifs that stall the ribosome. Acts as ribosome quality control (RQC) cofactor by joining the RQC complex to facilitate peptidyl transfer during CAT tailing step. Involved in actin dynamics and cell cycle progression, mRNA decay and probably in a pathway involved in stress response and maintenance of cell wall integrity. The chain is Eukaryotic translation initiation factor 5A-2 (ANB1) from Saccharomyces cerevisiae (strain ATCC 204508 / S288c) (Baker's yeast).